Reading from the N-terminus, the 354-residue chain is 5,10-methenyltetrahydromethanopterin hydrogenase (354 aa).

Belongs to the HMD family.

The catalysed reaction is 5,10-methenyl-5,6,7,8-tetrahydromethanopterin + H2 = 5,10-methylenetetrahydromethanopterin + H(+). It functions in the pathway one-carbon metabolism; methanogenesis from CO(2); 5,10-methylene-5,6,7,8-tetrahydromethanopterin from 5,10-methenyl-5,6,7,8-tetrahydromethanopterin (hydrogen route): step 1/1. Its function is as follows. Catalyzes the reversible reduction of methenyl-H(4)MPT(+) to methylene-H(4)MPT. The sequence is that of 5,10-methenyltetrahydromethanopterin hydrogenase from Methanococcus vannielii (strain ATCC 35089 / DSM 1224 / JCM 13029 / OCM 148 / SB).